The sequence spans 308 residues: Ribosomal RNA small subunit methyltransferase H (308 aa).

S-adenosyl-L-methionine is bound by residues 46 to 48, D63, Y87, D108, and Q115; that span reads AGH. The segment at 269–308 is disordered; it reads TKRPVEASEEERGRNPRARSAKLRAAEKVAAPEGLPEVEV. Basic and acidic residues predominate over residues 271-282; it reads RPVEASEEERGR.

Belongs to the methyltransferase superfamily. RsmH family.

Its subcellular location is the cytoplasm. The catalysed reaction is cytidine(1402) in 16S rRNA + S-adenosyl-L-methionine = N(4)-methylcytidine(1402) in 16S rRNA + S-adenosyl-L-homocysteine + H(+). Its function is as follows. Specifically methylates the N4 position of cytidine in position 1402 (C1402) of 16S rRNA. This chain is Ribosomal RNA small subunit methyltransferase H, found in Deinococcus geothermalis (strain DSM 11300 / CIP 105573 / AG-3a).